The primary structure comprises 89 residues: Small membrane A-kinase anchor protein (89 aa).

Residues 1 to 29 form a disordered region; it reads MGCMKSKRRDPTQNSDSSEKVDGKPGKHG. A lipid anchor (N-myristoyl glycine) is attached at glycine 2. The segment covering 17–29 has biased composition (basic and acidic residues); that stretch reads SSEKVDGKPGKHG.

It belongs to the small membrane AKAP family. Post-translationally, may be palmitoylated at Cys-3.

It localises to the cell membrane. Functionally, binds to type I regulatory subunits of protein kinase A and may anchor/target them to the plasma membrane. The polypeptide is Small membrane A-kinase anchor protein (Danio rerio (Zebrafish)).